The sequence spans 339 residues: Spore coat polysaccharide biosynthesis protein SpsG (339 aa).

The chain crosses the membrane as a helical span at residues 241–261 (IVAGGISLYEAICIGVPCLVL).

It to M.jannaschii MJ1062.

The protein localises to the cell membrane. Its pathway is spore coat biogenesis; spore coat polysaccharide biosynthesis. This Bacillus subtilis (strain 168) protein is Spore coat polysaccharide biosynthesis protein SpsG (spsG).